Consider the following 65-residue polypeptide: Small ribosomal subunit protein bS21 (65 aa).

Residues 33–42 (RRREHYEKPS) are compositionally biased toward basic and acidic residues. The disordered stretch occupies residues 33 to 65 (RRREHYEKPSVKRKRKEAARLRKLQKMAREANN). Positions 43–58 (VKRKRKEAARLRKLQK) are enriched in basic residues.

This sequence belongs to the bacterial ribosomal protein bS21 family.

The polypeptide is Small ribosomal subunit protein bS21 (Herpetosiphon aurantiacus (strain ATCC 23779 / DSM 785 / 114-95)).